The following is a 362-amino-acid chain: Probable dual-specificity RNA methyltransferase RlmN (362 aa).

Glu-105 serves as the catalytic Proton acceptor. The Radical SAM core domain maps to 111–344 (HEYGNSICVT…VTIRREQGHD (234 aa)). The cysteines at positions 118 and 349 are disulfide-linked. Cys-125, Cys-129, and Cys-132 together coordinate [4Fe-4S] cluster. Residues 175–176 (GE), Ser-207, 230–232 (SLH), and Asn-306 each bind S-adenosyl-L-methionine. Cys-349 acts as the S-methylcysteine intermediate in catalysis.

The protein belongs to the radical SAM superfamily. RlmN family. [4Fe-4S] cluster is required as a cofactor.

The protein localises to the cytoplasm. The catalysed reaction is adenosine(2503) in 23S rRNA + 2 reduced [2Fe-2S]-[ferredoxin] + 2 S-adenosyl-L-methionine = 2-methyladenosine(2503) in 23S rRNA + 5'-deoxyadenosine + L-methionine + 2 oxidized [2Fe-2S]-[ferredoxin] + S-adenosyl-L-homocysteine. It catalyses the reaction adenosine(37) in tRNA + 2 reduced [2Fe-2S]-[ferredoxin] + 2 S-adenosyl-L-methionine = 2-methyladenosine(37) in tRNA + 5'-deoxyadenosine + L-methionine + 2 oxidized [2Fe-2S]-[ferredoxin] + S-adenosyl-L-homocysteine. Its function is as follows. Specifically methylates position 2 of adenine 2503 in 23S rRNA and position 2 of adenine 37 in tRNAs. The protein is Probable dual-specificity RNA methyltransferase RlmN of Bacillus cereus (strain ATCC 14579 / DSM 31 / CCUG 7414 / JCM 2152 / NBRC 15305 / NCIMB 9373 / NCTC 2599 / NRRL B-3711).